Reading from the N-terminus, the 628-residue chain is DNA ligase (628 aa).

NAD(+) is bound by residues 36–40, 85–86, and Glu117; these read DVEYD and SL. The active-site N6-AMP-lysine intermediate is the Lys119. Positions 140, 174, 309, and 333 each coordinate NAD(+). The Zn(2+) site is built by Cys427, Cys430, Cys446, and Cys452.

This sequence belongs to the NAD-dependent DNA ligase family. LigA subfamily. It depends on Mg(2+) as a cofactor. Mn(2+) serves as cofactor.

The enzyme catalyses NAD(+) + (deoxyribonucleotide)n-3'-hydroxyl + 5'-phospho-(deoxyribonucleotide)m = (deoxyribonucleotide)n+m + AMP + beta-nicotinamide D-nucleotide.. Its function is as follows. DNA ligase that catalyzes the formation of phosphodiester linkages between 5'-phosphoryl and 3'-hydroxyl groups in double-stranded DNA using NAD as a coenzyme and as the energy source for the reaction. It is essential for DNA replication and repair of damaged DNA. This chain is DNA ligase, found in Tropheryma whipplei (strain TW08/27) (Whipple's bacillus).